A 228-amino-acid chain; its full sequence is Triosephosphate isomerase (228 aa).

A substrate-binding site is contributed by 12-14 (NFK). His-96 serves as the catalytic Electrophile. Glu-144 serves as the catalytic Proton acceptor. Residues Ile-149, Gly-184, and 205–206 (AS) contribute to the substrate site.

It belongs to the triosephosphate isomerase family. Homotetramer; dimer of dimers.

It is found in the cytoplasm. It catalyses the reaction D-glyceraldehyde 3-phosphate = dihydroxyacetone phosphate. It functions in the pathway carbohydrate biosynthesis; gluconeogenesis. Its pathway is carbohydrate degradation; glycolysis; D-glyceraldehyde 3-phosphate from glycerone phosphate: step 1/1. Functionally, involved in the gluconeogenesis. Catalyzes stereospecifically the conversion of dihydroxyacetone phosphate (DHAP) to D-glyceraldehyde-3-phosphate (G3P). The sequence is that of Triosephosphate isomerase from Pyrococcus furiosus (strain ATCC 43587 / DSM 3638 / JCM 8422 / Vc1).